Consider the following 276-residue polypeptide: Cytoskeleton protein RodZ (276 aa).

Topologically, residues 1–110 are cytoplasmic; that stretch reads MTSMRKKTIG…SSKKKKKKTS (110 aa). Residues 111–131 form a helical; Signal-anchor for type II membrane protein membrane-spanning segment; it reads FLPLFYFILFALSILIFVTYY. The Extracellular portion of the chain corresponds to 132-276; that stretch reads VWNYIQTQPE…GQITVTFTKN (145 aa).

It belongs to the RodZ family. Interacts with MltG and MreC in the elongasome. Interacts with KhpB (also called EloR/Jag).

The protein localises to the cell membrane. Cytoskeletal protein that is involved in cell-shape control through regulation of the length of the long axis. Probably part of the elongasome which synthesizes peripheral peptidoglycan. This Streptococcus pneumoniae (strain ATCC BAA-255 / R6) protein is Cytoskeleton protein RodZ.